The sequence spans 470 residues: MASLFAIGFSKFSPQPTSDYSKLLKVFHPKPYSLKFLFLKTLNPTRFFKVRANDGTEPSDKLQQYFQNQDYDKKYGFLENIDSFTIPKGLSEETIRLISKLKKEPAWILEYRLKAYAKFLKLEEPKWSDNRYPLLDLQDMCFYSAPKKKPTLNSSDIADEADDPKLLEEFDRLDVPLTKKKKCSPKVAVDAVYNSESIAITNKEPLEKSGVIFCSISEAIRKYPDLIKKYLGRVVPSDDNYYAALNTAVFSDGSFCYIPKNTRCPMPLSSYFRMNSIENTGQFERTLIVAEEGSFVEYSEGCTAISHDKNQLHAAVVELYCAEGAEIKYSTRGLCAGDRSKISWTQVEKGFAITWKYPSVVLEGDDSVGEAENARNTSTCDSMLIGDNAAANTYPYIQVKNPSARIEHEASTSKIGEDQIFYFQQRGIDHERALAAMISGFCRDVFNKLPNEFGAEVNQLLSIKLEGSVG.

This sequence belongs to the iron-sulfur cluster assembly SufBD family.

This is Iron-sulfur cluster assembly SufBD family protein ABCI9 (ABCI9) from Arabidopsis thaliana (Mouse-ear cress).